Reading from the N-terminus, the 361-residue chain is 45 kDa calcium-binding protein (361 aa).

An N-terminal signal peptide occupies residues 1 to 35 (MVWLVAMTSRQRSLCGLAAHGLWFLGLVLLMDATA). A glycan (N-linked (GlcNAc...) asparagine) is linked at Asn-39. 2 consecutive EF-hand domains span residues 97–132 (RSRRKLMVIFSKVDVNTDRRISAKEMQHWIMEKTAE) and 136–171 (EAVKENKLHFRAVDPDGDGHVSWDEYKVKFLASKGH). Ser-98 carries the phosphoserine modification. The Ca(2+) site is built by Asp-110, Asn-112, Asp-114, Arg-116, Glu-121, Asp-149, Asp-151, Asp-153, His-155, and Glu-160. At Thr-192 the chain carries Phosphothreonine. 4 consecutive EF-hand domains span residues 196–231 (LGNLRDRWYQADNPPADLLLTEDEFLSFLHPEHSRG), 232–267 (MLKFMVKEIVRDLDQDGDKQLSLPEFISLPVGTVEN), 277–312 (WVKDRKKEFEELIDSNHDGIVTMEELENYMDPMNEY), and 313–348 (NALNEAKQMIAIADENQNHHLEPEEILKYSEFFTGS). Asp-212 is a Ca(2+) binding site. Position 216 is a phosphothreonine (Thr-216). Residues Glu-219, Asp-245, Asp-247, Asp-249, Gln-251, and Glu-256 each coordinate Ca(2+). Thr-264 bears the Phosphothreonine mark. Ca(2+)-binding residues include Asp-290, Asn-292, and Asp-294. A Phosphothreonine modification is found at Thr-298. Residues Glu-301, Asp-326, Asn-328, Asn-330, His-332, and Glu-337 each contribute to the Ca(2+) site. Positions 308-361 (PMNEYNALNEAKQMIAIADENQNHHLEPEEILKYSEFFTGSKLMDYARNVHEEF) are necessary for intracellular retention in Golgi apparatus lumen.

Belongs to the CREC family. As to quaternary structure, a membrane-associated isoform interacts with STX3 and STXBP1. A membrane-associated isoform is expressed in acini of the pancreas (at protein level). Ubiquitous.

It is found in the golgi apparatus lumen. In terms of biological role, a membrane-associated isoform may be involved in the exocytosis of zymogens by pancreatic acini. May regulate calcium-dependent activities in the endoplasmic reticulum lumen or post-ER compartment. The chain is 45 kDa calcium-binding protein (Sdf4) from Rattus norvegicus (Rat).